A 259-amino-acid polypeptide reads, in one-letter code: Emerin (259 aa).

An N-acetylmethionine modification is found at Met-1. Residues 1 to 45 (MDDYAVLSDTELAAVLRQYNIPHGPIVGSTRKLYEKKIFEYETQR) form the LEM domain. Phosphoserine occurs at positions 8, 29, 54, 72, 88, 99, 141, and 142. The interval 46–223 (RRLLPPNSSS…PAAALGQDRQ (178 aa)) is interaction with F-actin. Position 161 is a phosphotyrosine (Tyr-161). The interaction with CTNNB1 stretch occupies residues 168–187 (RPISNVSRSSLGLSYYPTSS). Ser-171, Ser-174, and Ser-176 each carry phosphoserine. Residues 224 to 244 (VPLWGQLLLFLVFAAFLLFVY) traverse the membrane as a helical segment.

In terms of assembly, interacts with lamins A and C, BANF1, GMCL, BCLAF1 and YTHDC1/YT521. Interacts with TMEM43; the interaction retains emerin in the inner nuclear membrane. Interacts with ACTB, SPTAN1, F-actin, CTNNB1 and beta-tubulin. Interacts with SUN1 and SUN2. Interacts with TMEM201. Interacts with NEMP1. As to expression, in the ovary, highest expression is seen in primordial follicle oocytes (at protein level). Detected in embryonic fibroblasts, skeletal muscle, heart muscle and tongue epithelium (at protein level). Widely expressed.

Its subcellular location is the nucleus inner membrane. It is found in the nucleus outer membrane. Stabilizes and promotes the formation of a nuclear actin cortical network. Stimulates actin polymerization in vitro by binding and stabilizing the pointed end of growing filaments. Inhibits beta-catenin activity by preventing its accumulation in the nucleus. Acts by influencing the nuclear accumulation of beta-catenin through a CRM1-dependent export pathway. Links centrosomes to the nuclear envelope via a microtubule association. Required for proper localization of non-farnesylated prelamin-A/C. Together with NEMP1, contributes to nuclear envelope stiffness in germ cells. The sequence is that of Emerin (Emd) from Mus musculus (Mouse).